Here is a 51-residue protein sequence, read N- to C-terminus: rpoE leader peptide (51 aa).

Functionally, a short protein whose stop codon overlaps with the start codon of downstream rpoE; a premature stop codon at position 12 results in decreased expression of ECF sigma factor RpoE, thus they are translationally coupled. This is rpoE leader peptide from Escherichia coli (strain K12).